The primary structure comprises 116 residues: Flagellar transcriptional regulator FlhD (116 aa).

The protein belongs to the FlhD family. Homodimer; disulfide-linked. Forms a heterohexamer composed of two FlhC and four FlhD subunits. Each FlhC binds a FlhD dimer, forming a heterotrimer, and a hexamer assembles by dimerization of two heterotrimers.

It is found in the cytoplasm. Functionally, functions in complex with FlhC as a master transcriptional regulator that regulates transcription of several flagellar and non-flagellar operons by binding to their promoter region. Activates expression of class 2 flagellar genes, including fliA, which is a flagellum-specific sigma factor that turns on the class 3 genes. Also regulates genes whose products function in a variety of physiological pathways. In Proteus mirabilis (strain HI4320), this protein is Flagellar transcriptional regulator FlhD.